A 426-amino-acid chain; its full sequence is Glutamyl-tRNA reductase (426 aa).

Residues 49-52, serine 110, 115-117, and glutamine 121 contribute to the substrate site; these read TCNR and EAQ. The active-site Nucleophile is cysteine 50. 191–196 is an NADP(+) binding site; sequence GAGEMA.

It belongs to the glutamyl-tRNA reductase family. As to quaternary structure, homodimer.

It carries out the reaction (S)-4-amino-5-oxopentanoate + tRNA(Glu) + NADP(+) = L-glutamyl-tRNA(Glu) + NADPH + H(+). It participates in porphyrin-containing compound metabolism; protoporphyrin-IX biosynthesis; 5-aminolevulinate from L-glutamyl-tRNA(Glu): step 1/2. Functionally, catalyzes the NADPH-dependent reduction of glutamyl-tRNA(Glu) to glutamate 1-semialdehyde (GSA). The polypeptide is Glutamyl-tRNA reductase (Rhodopirellula baltica (strain DSM 10527 / NCIMB 13988 / SH1)).